A 335-amino-acid polypeptide reads, in one-letter code: UPF0353 protein MAV335 (335 aa).

2 helical membrane passes run 18-38 (WFFLFLLVVAGLAALYILMQL) and 67-87 (LPAILLVASLVLFTIAMAGPT). The region spanning 98–295 (VVMLVIDVSQ…QELKSVYATL (198 aa)) is the VWFA domain. A helical membrane pass occupies residues 309–329 (SVGWVRLGALVLRLAADALLI).

Belongs to the UPF0353 family.

Its subcellular location is the cell membrane. The protein is UPF0353 protein MAV335 of Mycobacterium avium.